A 664-amino-acid chain; its full sequence is UvrABC system protein B (664 aa).

One can recognise a Helicase ATP-binding domain in the interval 25 to 182; that stretch reads KSFGEGKNKI…RKFLHIQYAR (158 aa). An ATP-binding site is contributed by 38–45; it reads GVTGSGKT. The short motif at 91 to 114 is the Beta-hairpin element; sequence YYDYYQPEAYVPSSDTFIEKDMSM. One can recognise a Helicase C-terminal domain in the interval 429-595; sequence QIEDLLNEIR…TIQKEIHDIL (167 aa). Residues 625–660 form the UVR domain; the sequence is DKLREALKREMLRYANDMDFEKAAMFRDKMLALGPD.

Belongs to the UvrB family. In terms of assembly, forms a heterotetramer with UvrA during the search for lesions. Interacts with UvrC in an incision complex.

It localises to the cytoplasm. Its function is as follows. The UvrABC repair system catalyzes the recognition and processing of DNA lesions. A damage recognition complex composed of 2 UvrA and 2 UvrB subunits scans DNA for abnormalities. Upon binding of the UvrA(2)B(2) complex to a putative damaged site, the DNA wraps around one UvrB monomer. DNA wrap is dependent on ATP binding by UvrB and probably causes local melting of the DNA helix, facilitating insertion of UvrB beta-hairpin between the DNA strands. Then UvrB probes one DNA strand for the presence of a lesion. If a lesion is found the UvrA subunits dissociate and the UvrB-DNA preincision complex is formed. This complex is subsequently bound by UvrC and the second UvrB is released. If no lesion is found, the DNA wraps around the other UvrB subunit that will check the other stand for damage. The sequence is that of UvrABC system protein B from Leptospira biflexa serovar Patoc (strain Patoc 1 / Ames).